The sequence spans 341 residues: Anthranilate phosphoribosyltransferase (341 aa).

5-phospho-alpha-D-ribose 1-diphosphate contacts are provided by residues G79, 82-83 (GD), T87, 89-92 (NIST), 107-115 (KHGNRAVSS), and S119. G79 lines the anthranilate pocket. S91 provides a ligand contact to Mg(2+). N110 provides a ligand contact to anthranilate. An anthranilate-binding site is contributed by R165. Mg(2+) is bound by residues D224 and E225.

This sequence belongs to the anthranilate phosphoribosyltransferase family. In terms of assembly, homodimer. Mg(2+) is required as a cofactor.

It catalyses the reaction N-(5-phospho-beta-D-ribosyl)anthranilate + diphosphate = 5-phospho-alpha-D-ribose 1-diphosphate + anthranilate. Its pathway is amino-acid biosynthesis; L-tryptophan biosynthesis; L-tryptophan from chorismate: step 2/5. Its function is as follows. Catalyzes the transfer of the phosphoribosyl group of 5-phosphorylribose-1-pyrophosphate (PRPP) to anthranilate to yield N-(5'-phosphoribosyl)-anthranilate (PRA). The protein is Anthranilate phosphoribosyltransferase of Bacillus cereus (strain ATCC 14579 / DSM 31 / CCUG 7414 / JCM 2152 / NBRC 15305 / NCIMB 9373 / NCTC 2599 / NRRL B-3711).